The sequence spans 70 residues: Protein SlyX homolog (70 aa).

It belongs to the SlyX family.

In Shewanella oneidensis (strain ATCC 700550 / JCM 31522 / CIP 106686 / LMG 19005 / NCIMB 14063 / MR-1), this protein is Protein SlyX homolog.